Here is an 861-residue protein sequence, read N- to C-terminus: Probable beta-glucosidase A (861 aa).

The N-terminal stretch at 1 to 19 is a signal peptide; sequence MKLGWIEVAALAAASVVSA. Residues Asn62, Asn212, and Asn253 are each glycosylated (N-linked (GlcNAc...) asparagine). Residue Asp281 is part of the active site. 9 N-linked (GlcNAc...) asparagine glycosylation sites follow: Asn316, Asn323, Asn355, Asn443, Asn524, Asn543, Asn565, Asn669, and Asn713. Residues 730–754 form a disordered region; that stretch reads DSKYIPEGATDGSAQPRLPASGGAG. Asn846 carries an N-linked (GlcNAc...) asparagine glycan.

This sequence belongs to the glycosyl hydrolase 3 family.

Its subcellular location is the secreted. It carries out the reaction Hydrolysis of terminal, non-reducing beta-D-glucosyl residues with release of beta-D-glucose.. It participates in glycan metabolism; cellulose degradation. Beta-glucosidases are one of a number of cellulolytic enzymes involved in the degradation of cellulosic biomass. Catalyzes the last step releasing glucose from the inhibitory cellobiose. This chain is Probable beta-glucosidase A (bglA), found in Aspergillus oryzae (strain ATCC 42149 / RIB 40) (Yellow koji mold).